The following is a 185-amino-acid chain: Peptidyl-tRNA hydrolase (185 aa).

F12 provides a ligand contact to tRNA. H17 (proton acceptor) is an active-site residue. The tRNA site is built by Y61, N63, and N109.

The protein belongs to the PTH family. In terms of assembly, monomer.

Its subcellular location is the cytoplasm. The enzyme catalyses an N-acyl-L-alpha-aminoacyl-tRNA + H2O = an N-acyl-L-amino acid + a tRNA + H(+). In terms of biological role, hydrolyzes ribosome-free peptidyl-tRNAs (with 1 or more amino acids incorporated), which drop off the ribosome during protein synthesis, or as a result of ribosome stalling. Its function is as follows. Catalyzes the release of premature peptidyl moieties from peptidyl-tRNA molecules trapped in stalled 50S ribosomal subunits, and thus maintains levels of free tRNAs and 50S ribosomes. This chain is Peptidyl-tRNA hydrolase, found in Borrelia garinii subsp. bavariensis (strain ATCC BAA-2496 / DSM 23469 / PBi) (Borreliella bavariensis).